We begin with the raw amino-acid sequence, 161 residues long: MLILDRSSPQIFISNEQQDVSIDLQSAQRLVVLFLELQKVSTDQVYVYFLDDTALAQLHDEQFSDPSLTDTITLPIDKPGIASFPHVLGEAFVSPKAAMRFLEQYTEDQLYHEISRYVVHSLLHMLGYDDQTDEDKRIMQEQEDVSLSFLAEHQALLRPAV.

Zn(2+) is bound by residues H120, H124, and D130.

It belongs to the endoribonuclease YbeY family. Zn(2+) serves as cofactor.

It localises to the cytoplasm. Single strand-specific metallo-endoribonuclease involved in late-stage 70S ribosome quality control and in maturation of the 3' terminus of the 16S rRNA. The sequence is that of Endoribonuclease YbeY from Chlamydia trachomatis serovar L2 (strain ATCC VR-902B / DSM 19102 / 434/Bu).